We begin with the raw amino-acid sequence, 468 residues long: Trigger factor (468 aa).

The region spanning 162–243 is the PPIase FKBP-type domain; it reads GDVLTLDLQA…VSQVAARELP (82 aa). A disordered region spans residues 428–468; that stretch reads NGEIVDLDDEEDEETEAAEADATEAADAEKADDKAEEKTEG. A compositionally biased stretch (acidic residues) spans 432-453; sequence VDLDDEEDEETEAAEADATEAA. Over residues 454 to 468 the composition is skewed to basic and acidic residues; the sequence is DAEKADDKAEEKTEG.

Belongs to the FKBP-type PPIase family. Tig subfamily.

It localises to the cytoplasm. It carries out the reaction [protein]-peptidylproline (omega=180) = [protein]-peptidylproline (omega=0). Functionally, involved in protein export. Acts as a chaperone by maintaining the newly synthesized protein in an open conformation. Functions as a peptidyl-prolyl cis-trans isomerase. This chain is Trigger factor, found in Streptomyces coelicolor (strain ATCC BAA-471 / A3(2) / M145).